A 496-amino-acid polypeptide reads, in one-letter code: Probable malate:quinone oxidoreductase (496 aa).

Belongs to the MQO family. It depends on FAD as a cofactor.

It carries out the reaction (S)-malate + a quinone = a quinol + oxaloacetate. The protein operates within carbohydrate metabolism; tricarboxylic acid cycle; oxaloacetate from (S)-malate (quinone route): step 1/1. The chain is Probable malate:quinone oxidoreductase from Prochlorococcus marinus (strain NATL1A).